The following is a 337-amino-acid chain: Viral cathepsin (337 aa).

The N-terminal stretch at 1–16 (MNKLLILFLLLNAALT) is a signal peptide. Residues 17 to 126 (RQDNHASANN…VVDGPAQRQR (110 aa)) constitute a propeptide, activation peptide. 3 disulfide bridges follow: Cys-147-Cys-188, Cys-181-Cys-221, and Cys-276-Cys-324. Cys-150 is an active-site residue. Active-site residues include His-283 and Asn-303.

Belongs to the peptidase C1 family. Post-translationally, synthesized as an inactive proenzyme and activated by proteolytic removal of the inhibitory propeptide.

It catalyses the reaction Endopeptidase of broad specificity, hydrolyzing substrates of both cathepsin L and cathepsin B.. In terms of biological role, cysteine protease that plays an essential role in host liquefaction to facilitate horizontal transmission of the virus. May participate in the degradation of foreign protein expressed by the baculovirus system. In Lepidoptera (butterflies and moths), this protein is Viral cathepsin (VCATH).